A 300-amino-acid chain; its full sequence is tRNA dimethylallyltransferase (300 aa).

9-16 (GPTASGKS) serves as a coordination point for ATP. Substrate is bound at residue 11 to 16 (TASGKS). The tract at residues 34 to 37 (DSKQ) is interaction with substrate tRNA.

Belongs to the IPP transferase family. As to quaternary structure, monomer. Requires Mg(2+) as cofactor.

The catalysed reaction is adenosine(37) in tRNA + dimethylallyl diphosphate = N(6)-dimethylallyladenosine(37) in tRNA + diphosphate. Catalyzes the transfer of a dimethylallyl group onto the adenine at position 37 in tRNAs that read codons beginning with uridine, leading to the formation of N6-(dimethylallyl)adenosine (i(6)A). In Ehrlichia canis (strain Jake), this protein is tRNA dimethylallyltransferase.